A 241-amino-acid polypeptide reads, in one-letter code: MEIKERKKLDYLPNVFLLPDGNKISVTDKFINCEKYISRSRLTFQGCFEVSILENKIKVDKAKETNGIYYTPNPPIFNITFKQKIFRKINDIKSMLINLDLSKVSLKSSSIIIKYDNYSIQLFDIYYKGEKLEFSPAFYPDGKQGHLSVYEVPPLKIEKINEELFEKTRIIGIYNHIIEFDINVLKYKQLHIMPGEGALVYLPEPPVVKIISPEHDNVGFTEFGGKWLLFSHPVPKKNPKD.

This is an uncharacterized protein from Saccharolobus islandicus (Sulfolobus islandicus).